Consider the following 73-residue polypeptide: DNA-directed RNA polymerase subunit epsilon (73 aa).

Belongs to the RNA polymerase subunit epsilon family. RNAP is composed of a core of 2 alpha, a beta and a beta' subunit. The core is associated with a delta subunit, and at least one of epsilon or omega. When a sigma factor is associated with the core the holoenzyme is formed, which can initiate transcription.

It catalyses the reaction RNA(n) + a ribonucleoside 5'-triphosphate = RNA(n+1) + diphosphate. In terms of biological role, a non-essential component of RNA polymerase (RNAP). The chain is DNA-directed RNA polymerase subunit epsilon from Lactobacillus helveticus (strain DPC 4571).